A 178-amino-acid chain; its full sequence is MSSAWEAVRALASGFATTFVHLFRKPVTEEYPEVKRALPARTRAVIVLTRDPDGGERCVACYLCSAVCPVSCISMQAAEREDGRRHAAWFRINFARCIYCGLCEEACPTSAIQLTPFFETCERDILKLVYEKEDLLVDHQGKDKEYNFYKYAGVTTDVGGKGEHVQEDEPVDLRSNLP.

4Fe-4S ferredoxin-type domains lie at 46–78 (IVLT…MQAA) and 88–117 (AWFR…LTPF). [4Fe-4S] cluster contacts are provided by Cys-58, Cys-61, Cys-64, Cys-68, Cys-97, Cys-100, Cys-103, and Cys-107.

The protein belongs to the complex I 23 kDa subunit family. In terms of assembly, NDH-1 is composed of 14 different subunits. Subunits NuoA, H, J, K, L, M, N constitute the membrane sector of the complex. [4Fe-4S] cluster serves as cofactor.

It localises to the cell inner membrane. The catalysed reaction is a quinone + NADH + 5 H(+)(in) = a quinol + NAD(+) + 4 H(+)(out). Its function is as follows. NDH-1 shuttles electrons from NADH, via FMN and iron-sulfur (Fe-S) centers, to quinones in the respiratory chain. The immediate electron acceptor for the enzyme in this species is believed to be ubiquinone. Couples the redox reaction to proton translocation (for every two electrons transferred, four hydrogen ions are translocated across the cytoplasmic membrane), and thus conserves the redox energy in a proton gradient. In Syntrophobacter fumaroxidans (strain DSM 10017 / MPOB), this protein is NADH-quinone oxidoreductase subunit I 2.